Consider the following 310-residue polypeptide: Glutaminase 1 (310 aa).

7 residues coordinate substrate: Ser-66, Asn-117, Glu-161, Asn-168, Tyr-192, Tyr-244, and Val-262. Lys-294 bears the N6-acetyllysine mark.

This sequence belongs to the glutaminase family. In terms of assembly, homotetramer.

The enzyme catalyses L-glutamine + H2O = L-glutamate + NH4(+). This Escherichia coli O6:H1 (strain CFT073 / ATCC 700928 / UPEC) protein is Glutaminase 1.